The following is a 46-amino-acid chain: MNCLKICGFFFALIAALATAEAGTQVIHAGGHTLIQTDRSQYIRKN.

Residues 1–22 (MNCLKICGFFFALIAALATAEA) form the signal peptide.

Hemolymph (at protein level).

Its subcellular location is the secreted. Functionally, peptide which plays a role in the humoral immune response to a subset of filamentous fungi, including F.oxysporum and F.verticillioides. The protein is Daisho2 of Drosophila melanogaster (Fruit fly).